The following is a 394-amino-acid chain: tRNA-specific adenosine deaminase 1 (394 aa).

One can recognise an A to I editase domain in the interval 54–388 (SLGCGTKCIG…TKKPHELLDF (335 aa)). Residue histidine 78 participates in Zn(2+) binding. The Proton donor role is filled by glutamate 80. Residues arginine 84 and arginine 85 each contribute to the 1D-myo-inositol hexakisphosphate site. Cysteine 127 and cysteine 191 together coordinate Zn(2+). Lysine 194, arginine 197, lysine 320, lysine 357, and lysine 381 together coordinate 1D-myo-inositol hexakisphosphate.

It belongs to the ADAT1 family. The cofactor is 1D-myo-inositol hexakisphosphate. As to expression, widely expressed in early embryos, and later concentrates in the central nervous system.

It carries out the reaction adenosine(37) in tRNA(Ala) + H2O + H(+) = inosine(37) in tRNA(Ala) + NH4(+). In terms of biological role, specifically deaminates adenosine-37 to inosine in tRNA-Ala. The sequence is that of tRNA-specific adenosine deaminase 1 from Drosophila melanogaster (Fruit fly).